The primary structure comprises 927 residues: E3 ubiquitin-protein ligase HOS1 (927 aa).

The RING-type; degenerate zinc finger occupies 53-93; the sequence is CRATRDLASCGRFVNYVLNPCGHASLCTECCQRCDVCPICR. 3 disordered regions span residues 678 to 699, 782 to 806, and 832 to 927; these read SGQF…LPDA, FKDL…SPEV, and VKSS…FAAR. Over residues 797–806 the composition is skewed to basic and acidic residues; that stretch reads KRTEESSPEV. Composition is skewed to polar residues over residues 832-851 and 878-892; these read VKSS…STFF and NNNN…NNSG. A compositionally biased stretch (basic residues) spans 917 to 927; the sequence is KGRRRRRFAAR.

Interacts with SCRM/ICE1, FLK and MSI4/FVE. In terms of tissue distribution, ubiquitously expressed with higher levels in leaf vasculature, roots and root tips.

It is found in the nucleus. The protein localises to the cytoplasm. It catalyses the reaction S-ubiquitinyl-[E2 ubiquitin-conjugating enzyme]-L-cysteine + [acceptor protein]-L-lysine = [E2 ubiquitin-conjugating enzyme]-L-cysteine + N(6)-ubiquitinyl-[acceptor protein]-L-lysine.. Its pathway is protein modification; protein ubiquitination. E3 ubiquitin-protein ligase that mediates ubiquitination and subsequent proteasomal degradation of the transcription factor ICE1. Acts as a negative regulator of cold signaling pathways. Probably involved in recruiting the NUP107-160 subcomplex of the nuclear pore complex to chromatin. Controls flowering time in response to ambient temperatures (16 and 23 degrees Celsius) and intermittent cold, probably via the regulation of FT and TSF levels. This Arabidopsis thaliana (Mouse-ear cress) protein is E3 ubiquitin-protein ligase HOS1 (HOS1).